A 932-amino-acid polypeptide reads, in one-letter code: Lon protease homolog 2, peroxisomal (932 aa).

One can recognise a Lon N-terminal domain in the interval 11 to 259 (LALVPLPKGS…RVVELLARQV (249 aa)). Residues 304–340 (TGLTPPGAAGGRNNEDEKETNEVDELQKRLQEAELSP) form a disordered region. A compositionally biased stretch (basic and acidic residues) spans 328-340 (ELQKRLQEAELSP). Residue 486-493 (GPPGTGKT) participates in ATP binding. The 188-residue stretch at 729 to 916 (HGRPGVVTGL…WEAIRQVWPG (188 aa)) folds into the Lon proteolytic domain. Catalysis depends on residues serine 822 and lysine 865. Positions 930–932 (SRL) match the Microbody targeting signal motif.

The protein belongs to the peptidase S16 family.

It localises to the peroxisome matrix. It catalyses the reaction Hydrolysis of proteins in presence of ATP.. ATP-dependent serine protease that mediates the selective degradation of misfolded and unassembled polypeptides in the peroxisomal matrix. Necessary for type 2 peroxisome targeting signal (PTS2)-containing protein processing and facilitates peroxisome matrix protein import. The protein is Lon protease homolog 2, peroxisomal of Aspergillus fumigatus (strain ATCC MYA-4609 / CBS 101355 / FGSC A1100 / Af293) (Neosartorya fumigata).